A 788-amino-acid chain; its full sequence is IQ motif and ubiquitin-like domain-containing protein (788 aa).

The disordered stretch occupies residues 1–89 (MSDPEEERVA…SLGSASGSQD (89 aa)). A compositionally biased stretch (basic and acidic residues) spans 7–20 (ERVADSTAHYEEAG). The span at 31 to 54 (EAEGSDVMPEQDDEVQELTTESEE) shows a compositional bias: acidic residues. Residues 68-78 (KSDDSKPREEV) are compositionally biased toward basic and acidic residues. The span at 80–89 (SLGSASGSQD) shows a compositional bias: polar residues. The Ubiquitin-like domain maps to 127 to 203 (ATVKIVLIPA…VQVEVFSTLP (77 aa)). In terms of domain architecture, IQ spans 334-363 (RLHAVIVIQTSYRRWHAKRYVESLRKQKKL).

As to quaternary structure, component of the axonemal radial spoke 1 (RS1) complex, at least composed of spoke head proteins RSPH1, RSPH3B, RSPH9 and the cilia-specific component RSPH4A or sperm-specific component RSPH6A, spoke stalk proteins RSPH14, DNAJB13, DYDC1, ROPN1L and NME5, and the anchor protein IQUB. Does not appear to be part of radial spoke complexes 2 or 3 (RS2 or RS3). Interacts with CALM1. Interacts with DNAJB13. Interacts with DYNLL2. Interacts with NME5. Interacts with RSPH3. Interacts with RSPH9. Interacts with ZMYND10. Interacts with calmodulin; the interaction occurs in conditions of low but not high calcium. Expressed in the flagellum of sperm cells and cilia of tracheal epithelial cells (at protein level). High expression in testis, also present in brain and lung.

The protein resides in the cytoplasm. It localises to the cytoskeleton. The protein localises to the flagellum axoneme. It is found in the cell projection. Its subcellular location is the cilium. Anchors the radial spoke 1 (RS1) complex to the A microtubule of outer doublet microtubules in axonemes. The triple radial spokes (RS1, RS2 and RS3) are required to modulate beating of the sperm flagellum. May play a role in inhibiting signaling via MAPK1/ERK2 and MAPK3/ERK1. Additionally, may play a role in the functioning of cilia. Not required for the functioning of tracheal or ependymal cilia. This chain is IQ motif and ubiquitin-like domain-containing protein (Iqub), found in Mus musculus (Mouse).